A 433-amino-acid chain; its full sequence is C4-dicarboxylate transport protein (433 aa).

A run of 8 helical transmembrane segments spans residues Ile-8–Pro-28, Leu-44–Met-64, Leu-78–Leu-98, Gly-148–Gly-168, Ile-188–Ile-208, Leu-222–Ala-242, Ile-307–Met-327, and Ala-355–Ile-375.

This sequence belongs to the dicarboxylate/amino acid:cation symporter (DAACS) (TC 2.A.23) family.

Its subcellular location is the cell inner membrane. Its function is as follows. Responsible for the transport of dicarboxylates such as succinate, fumarate, and malate from the periplasm across the membrane. The polypeptide is C4-dicarboxylate transport protein (Cupriavidus taiwanensis (strain DSM 17343 / BCRC 17206 / CCUG 44338 / CIP 107171 / LMG 19424 / R1) (Ralstonia taiwanensis (strain LMG 19424))).